The chain runs to 82 residues: Putative membrane protein insertion efficiency factor (82 aa).

The tract at residues 61–82 (HEGGYDPVPKRKNKNSEGKREE) is disordered.

The protein belongs to the UPF0161 family.

Its subcellular location is the cell inner membrane. In terms of biological role, could be involved in insertion of integral membrane proteins into the membrane. The polypeptide is Putative membrane protein insertion efficiency factor (Fusobacterium nucleatum subsp. nucleatum (strain ATCC 25586 / DSM 15643 / BCRC 10681 / CIP 101130 / JCM 8532 / KCTC 2640 / LMG 13131 / VPI 4355)).